Reading from the N-terminus, the 97-residue chain is SAGA-associated factor 11 (97 aa).

Residues 70 to 91 (IECNVCGREVSGNRFAAHLVRC) form an SGF11-type zinc finger.

This sequence belongs to the SGF11 family. Component of the 1.8 MDa SAGA transcription coactivator-HAT complex. SAGA is built of 5 distinct domains with specialized functions. Within the SAGA complex, SUS1, SGF11, SGF73 and UBP8 form an additional subcomplex of SAGA called the DUB module (deubiquitination module). Interacts directly with SGF73, SUS1 and UBP8.

The protein localises to the nucleus. Its function is as follows. Functions as a component of the transcription regulatory histone acetylation (HAT) complex SAGA. At the promoters, SAGA is required for recruitment of the basal transcription machinery. It influences RNA polymerase II transcriptional activity through different activities such as TBP interaction and promoter selectivity, interaction with transcription activators, and chromatin modification through histone acetylation and deubiquitination. SAGA acetylates nucleosomal histone H3 to some extent (to form H3K9ac, H3K14ac, H3K18ac and H3K23ac). SAGA interacts with DNA via upstream activating sequences (UASs). Involved in transcriptional regulation of a subset of SAGA-regulated genes. Within the SAGA complex, participates in a subcomplex, that specifically deubiquitinates histones H2B. The polypeptide is SAGA-associated factor 11 (Kluyveromyces lactis (strain ATCC 8585 / CBS 2359 / DSM 70799 / NBRC 1267 / NRRL Y-1140 / WM37) (Yeast)).